A 241-amino-acid chain; its full sequence is 2-C-methyl-D-erythritol 4-phosphate cytidylyltransferase (241 aa).

Belongs to the IspD/TarI cytidylyltransferase family. IspD subfamily.

It catalyses the reaction 2-C-methyl-D-erythritol 4-phosphate + CTP + H(+) = 4-CDP-2-C-methyl-D-erythritol + diphosphate. It functions in the pathway isoprenoid biosynthesis; isopentenyl diphosphate biosynthesis via DXP pathway; isopentenyl diphosphate from 1-deoxy-D-xylulose 5-phosphate: step 2/6. Catalyzes the formation of 4-diphosphocytidyl-2-C-methyl-D-erythritol from CTP and 2-C-methyl-D-erythritol 4-phosphate (MEP). The protein is 2-C-methyl-D-erythritol 4-phosphate cytidylyltransferase of Mycobacterium leprae (strain Br4923).